A 143-amino-acid chain; its full sequence is Crossover junction endodeoxyribonuclease Hjc (143 aa).

Mg(2+) is bound at residue Glu-12. Ser-32 is an active-site residue. Mg(2+)-binding residues include Asp-42 and Glu-55.

The protein belongs to the Holliday junction resolvase Hjc family. Homodimer. Mg(2+) is required as a cofactor.

It catalyses the reaction Endonucleolytic cleavage at a junction such as a reciprocal single-stranded crossover between two homologous DNA duplexes (Holliday junction).. Its function is as follows. A structure-specific endonuclease that resolves Holliday junction (HJ) intermediates during genetic recombination. Cleaves 4-way DNA junctions introducing paired nicks in opposing strands, leaving a 5'-terminal phosphate and a 3'-terminal hydroxyl group that are subsequently ligated to produce recombinant products. Hjc, Hjm (Hel308) and PINA coordinate HJ migration and cleavage of replication forks in a coordinated way. The protein is Crossover junction endodeoxyribonuclease Hjc of Saccharolobus islandicus (strain REY15A) (Sulfolobus islandicus).